The primary structure comprises 253 residues: MLTIDINCDCGESYGAFQVGDDDGILPFVSSANVACGGHAGDPMVMRRTVRRCRDLGVAVGAHPSYPDLYGFGRRVLPLTPDEIEAWVLTQIGSLAAIARSEKVELRHVKPHGALYNVAARDLTVAMAIARAVAAFSRELALVGLAGSLLITAGHEVGVPVLAEAFADRTYEADGTLRNRHHPDALIIDPAACLAQTLHIIRDGAVRAVDGTLVPLQAATICIHGDTPGAALRAATIRQGLAAAGITVQAPQR.

This sequence belongs to the LamB/PxpA family. Forms a complex composed of PxpA, PxpB and PxpC.

It catalyses the reaction 5-oxo-L-proline + ATP + 2 H2O = L-glutamate + ADP + phosphate + H(+). Catalyzes the cleavage of 5-oxoproline to form L-glutamate coupled to the hydrolysis of ATP to ADP and inorganic phosphate. This Chloroflexus aurantiacus (strain ATCC 29364 / DSM 637 / Y-400-fl) protein is 5-oxoprolinase subunit A.